Consider the following 487-residue polypeptide: Beta-barrel assembly-enhancing protease (487 aa).

The signal sequence occupies residues 1–27 (MFRQLKKNLVATLIAAMTIGQVAPAFA). Histidine 136 contacts Zn(2+). Residue glutamate 137 is part of the active site. Residues histidine 140 and glutamate 201 each contribute to the Zn(2+) site. Aspartate 205 functions as the Proton donor in the catalytic mechanism. TPR repeat units follow at residues 309–342 (RAAQ…EPGN), 344–376 (WYLD…RTNP), 377–409 (VLQL…NKDD), and 427–460 (DQEL…VKLG).

Belongs to the peptidase M48 family. BepA subfamily. In terms of assembly, interacts with BamA and LoiP. Zn(2+) is required as a cofactor.

Its subcellular location is the periplasm. With respect to regulation, protease activity is inhibited by the metal chelating reagents 1,10-phenanthroline and EDTA. Its function is as follows. Functions both as a chaperone and a metalloprotease. Maintains the integrity of the outer membrane by promoting either the assembly or the elimination of outer membrane proteins, depending on their folding state. Promotes disulfide rearrangement of LptD during its biogenesis, and proteolytic degradation of LptD and BamA when their proper assembly is compromised. May facilitate membrane attachment of LoiP under unfavorable conditions. This chain is Beta-barrel assembly-enhancing protease, found in Escherichia coli (strain K12).